We begin with the raw amino-acid sequence, 120 residues long: Large ribosomal subunit protein uL18 (120 aa).

The segment at 1 to 22 (MITKTSKNAARQKRHARVRAKL) is disordered. A compositionally biased stretch (basic residues) spans 10-20 (ARQKRHARVRA).

Belongs to the universal ribosomal protein uL18 family. Part of the 50S ribosomal subunit; part of the 5S rRNA/L5/L18/L25 subcomplex. Contacts the 5S and 23S rRNAs.

Functionally, this is one of the proteins that bind and probably mediate the attachment of the 5S RNA into the large ribosomal subunit, where it forms part of the central protuberance. The polypeptide is Large ribosomal subunit protein uL18 (Bacillus velezensis (strain DSM 23117 / BGSC 10A6 / LMG 26770 / FZB42) (Bacillus amyloliquefaciens subsp. plantarum)).